The primary structure comprises 247 residues: Germin-like protein 9-1 (247 aa).

Positions 1–25 (MMMSSRSSVSLGVLLLLAVILSAGA) are cleaved as a signal peptide. One can recognise a Cupin type-1 domain in the interval 53-201 (KNLVTGNSGD…SMHTDQATVD (149 aa)). Mn(2+) contacts are provided by His-100, His-102, and Glu-107. N-linked (GlcNAc...) asparagine glycosylation is present at Asn-126. Residue His-148 participates in Mn(2+) binding. The N-linked (GlcNAc...) asparagine glycan is linked to Asn-153.

It belongs to the germin family. Oligomer (believed to be a pentamer but probably hexamer).

Its subcellular location is the secreted. The protein resides in the extracellular space. The protein localises to the apoplast. In terms of biological role, may play a role in plant defense. Probably has no oxalate oxidase activity even if the active site is conserved. The chain is Germin-like protein 9-1 from Oryza sativa subsp. japonica (Rice).